A 63-amino-acid chain; its full sequence is Putative flagellar calcium-binding protein (63 aa).

Positions 1 to 11 (MGCISSKSTQT) are enriched in polar residues. Residues 1–23 (MGCISSKSTQTGKKEGKTAAERK) form a disordered region. The segment covering 12–23 (GKKEGKTAAERK) has biased composition (basic and acidic residues). An EF-hand domain is found at 40–63 (EDKARRIELFKKFDKNNTGKLSME). Ca(2+) is bound by residues Asp53, Asn55, Thr57, and Lys59.

This sequence belongs to the calflagin family.

It is found in the cell projection. The protein localises to the cilium. Its subcellular location is the flagellum. The sequence is that of Putative flagellar calcium-binding protein (CABP) from Crithidia fasciculata.